Reading from the N-terminus, the 235-residue chain is RNA polymerase sigma factor SigI7 (235 aa).

Residues 49-62 (DELSIALMAFVETI) carry the Polymerase core binding motif. A DNA-binding region (H-T-H motif) is located at residues 191–210 (VAEIEQSLKIPRKTIERARK).

This sequence belongs to the sigma-70 factor family. SigI subfamily. As to quaternary structure, interacts with RsgI7.

It is found in the cytoplasm. With respect to regulation, negatively regulated by the anti-sigma-I factor RsgI7. In terms of biological role, sigma factors are initiation factors that promote the attachment of RNA polymerase to specific initiation sites and are then released. This chain is RNA polymerase sigma factor SigI7, found in Acetivibrio thermocellus (strain ATCC 27405 / DSM 1237 / JCM 9322 / NBRC 103400 / NCIMB 10682 / NRRL B-4536 / VPI 7372) (Clostridium thermocellum).